The following is a 269-amino-acid chain: Tryptophan synthase alpha chain (269 aa).

Active-site proton acceptor residues include Glu49 and Asp60.

This sequence belongs to the TrpA family. As to quaternary structure, tetramer of two alpha and two beta chains.

The catalysed reaction is (1S,2R)-1-C-(indol-3-yl)glycerol 3-phosphate + L-serine = D-glyceraldehyde 3-phosphate + L-tryptophan + H2O. It participates in amino-acid biosynthesis; L-tryptophan biosynthesis; L-tryptophan from chorismate: step 5/5. The alpha subunit is responsible for the aldol cleavage of indoleglycerol phosphate to indole and glyceraldehyde 3-phosphate. The polypeptide is Tryptophan synthase alpha chain (Klebsiella aerogenes (Enterobacter aerogenes)).